A 527-amino-acid chain; its full sequence is MSITSDEVNFLVYRYLQESGFSHSAFTFGIESHISQSNINGTLVPPAALISILQKGLQYVEAEISINEDGTVFDGRPIESLSLIDAVMPDVVQTRQQAFREKLAQQQANAAAAAAAAAATATSTAATTPAAAAQQNPPKNGEATVNGEENGAHAINNHSKPMEIDGDVEIPPSKATVLRGHESEVFICAWNPVSDLLASGSGDSTARIWNLNENSNGGSTQLVLRHCIREGGHDVPSNKDVTSLDWNSDGTLLATGSYDGFARIWTEDGNLASTLGQHKGPIFALKWNKKGNYILSAGVDKTTIIWDAHTGEAKQQFPFHSAPALDVDWQNNTTFASCSTDMCIHVCRLGCDRPVKTFQGHTNEVNAIKWDPSGMLLASCSDDMTLKIWSMKQDACVHDLQAHSKEIYTIKWSPTGPATSNPNSNIMLASASFDSTVRLWDVERGVCIHTLTKHQEPVYSVAFSPDGKYLASGSFDKCVHIWNTQSGSLVHSYRGTGGIFEVCWNARGDKVGASASDGSVCVLDLRK.

Position 2 is an N-acetylserine (Ser2). One can recognise a LisH domain in the interval 4-36; it reads TSDEVNFLVYRYLQESGFSHSAFTFGIESHISQ. One can recognise an F-box-like domain in the interval 41-86; sequence GTLVPPAALISILQKGLQYVEAEISINEDGTVFDGRPIESLSLIDA. Lys102 bears the N6-acetyllysine mark. Residues 127-164 are disordered; sequence TTPAAAAQQNPPKNGEATVNGEENGAHAINNHSKPMEI. 8 WD repeats span residues 180–219, 236–275, 277–316, 319–359, 360–399, 402–450, 453–492, and 494–526; these read GHESEVFICAWNPVSDLLASGSGDSTARIWNLNENSNGGS, PSNKDVTSLDWNSDGTLLATGSYDGFARIWTEDGNLASTL, QHKGPIFALKWNKKGNYILSAGVDKTTIIWDAHTGEAKQQ, FHSA…KTFQ, GHTNEVNAIKWDPSGMLLASCSDDMTLKIWSMKQDACVHD, AHSK…CIHT, KHQEPVYSVAFSPDGKYLASGSFDKCVHIWNTQSGSLVHS, and RGTGGIFEVCWNARGDKVGASASDGSVCVLDLR. A Glycyl lysine isopeptide (Lys-Gly) (interchain with G-Cter in SUMO2) cross-link involves residue Lys290.

This sequence belongs to the WD repeat EBI family. Homotetramer; dimer of dimers. Component of the N-Cor repressor complex, at least composed of NCOR1, NCOR2, HDAC3, TBL1X, TBL1R, CORO2A and GPS2. Component of a E3 ubiquitin ligase complex containing UBE2D1, SIAH1, CACYBP/SIP, SKP1, APC and TBL1X. Interacts with GPS2 (when sumoylated); leading to protect GPS2 against degradation by the proteasome. Probably part of other corepressor complexes, that do not contain NCOR1 and NCOR2. Interacts with histones H2B, H3a and H4. Interacts with MECP2; recruits TBL1X to the heterochromatin foci. Interacts with USP44. As to expression, expressed in the cochlea.

Its subcellular location is the nucleus. Its function is as follows. F-box-like protein involved in the recruitment of the ubiquitin/19S proteasome complex to nuclear receptor-regulated transcription units. Plays an essential role in transcription activation mediated by nuclear receptors. Probably acts as integral component of corepressor complexes that mediates the recruitment of the 19S proteasome complex, leading to the subsequent proteasomal degradation of transcription repressor complexes, thereby allowing cofactor exchange. The polypeptide is F-box-like/WD repeat-containing protein TBL1X (Tbl1x) (Mus musculus (Mouse)).